A 223-amino-acid chain; its full sequence is Phosphoribosylformylglycinamidine synthase subunit PurQ (223 aa).

Residues 4–223 (KIGVITFPGT…FLSAVGTIAA (220 aa)) enclose the Glutamine amidotransferase type-1 domain. C87 acts as the Nucleophile in catalysis. Catalysis depends on residues H195 and E197.

As to quaternary structure, part of the FGAM synthase complex composed of 1 PurL, 1 PurQ and 2 PurS subunits.

It localises to the cytoplasm. The catalysed reaction is N(2)-formyl-N(1)-(5-phospho-beta-D-ribosyl)glycinamide + L-glutamine + ATP + H2O = 2-formamido-N(1)-(5-O-phospho-beta-D-ribosyl)acetamidine + L-glutamate + ADP + phosphate + H(+). The enzyme catalyses L-glutamine + H2O = L-glutamate + NH4(+). It participates in purine metabolism; IMP biosynthesis via de novo pathway; 5-amino-1-(5-phospho-D-ribosyl)imidazole from N(2)-formyl-N(1)-(5-phospho-D-ribosyl)glycinamide: step 1/2. Functionally, part of the phosphoribosylformylglycinamidine synthase complex involved in the purines biosynthetic pathway. Catalyzes the ATP-dependent conversion of formylglycinamide ribonucleotide (FGAR) and glutamine to yield formylglycinamidine ribonucleotide (FGAM) and glutamate. The FGAM synthase complex is composed of three subunits. PurQ produces an ammonia molecule by converting glutamine to glutamate. PurL transfers the ammonia molecule to FGAR to form FGAM in an ATP-dependent manner. PurS interacts with PurQ and PurL and is thought to assist in the transfer of the ammonia molecule from PurQ to PurL. The chain is Phosphoribosylformylglycinamidine synthase subunit PurQ from Corynebacterium glutamicum (strain ATCC 13032 / DSM 20300 / JCM 1318 / BCRC 11384 / CCUG 27702 / LMG 3730 / NBRC 12168 / NCIMB 10025 / NRRL B-2784 / 534).